The following is a 467-amino-acid chain: tRNA(Ile)-lysidine synthase (467 aa).

An ATP-binding site is contributed by 26 to 31 (SGGPDS).

It belongs to the tRNA(Ile)-lysidine synthase family.

The protein resides in the cytoplasm. It catalyses the reaction cytidine(34) in tRNA(Ile2) + L-lysine + ATP = lysidine(34) in tRNA(Ile2) + AMP + diphosphate + H(+). In terms of biological role, ligates lysine onto the cytidine present at position 34 of the AUA codon-specific tRNA(Ile) that contains the anticodon CAU, in an ATP-dependent manner. Cytidine is converted to lysidine, thus changing the amino acid specificity of the tRNA from methionine to isoleucine. The polypeptide is tRNA(Ile)-lysidine synthase (Clostridium tetani (strain Massachusetts / E88)).